Reading from the N-terminus, the 206-residue chain is Small ribosomal subunit protein uS4 (206 aa).

In terms of domain architecture, S4 RNA-binding spans 96-158; the sequence is GRLDNVVYRM…AKQQSRIKAA (63 aa).

This sequence belongs to the universal ribosomal protein uS4 family. Part of the 30S ribosomal subunit. Contacts protein S5. The interaction surface between S4 and S5 is involved in control of translational fidelity.

One of the primary rRNA binding proteins, it binds directly to 16S rRNA where it nucleates assembly of the body of the 30S subunit. In terms of biological role, with S5 and S12 plays an important role in translational accuracy. The protein is Small ribosomal subunit protein uS4 of Vibrio atlanticus (strain LGP32) (Vibrio splendidus (strain Mel32)).